The primary structure comprises 262 residues: tRNA pseudouridine synthase A (262 aa).

Residue D51 is the Nucleophile of the active site. Y109 is a binding site for substrate.

It belongs to the tRNA pseudouridine synthase TruA family. As to quaternary structure, homodimer.

The enzyme catalyses uridine(38/39/40) in tRNA = pseudouridine(38/39/40) in tRNA. In terms of biological role, formation of pseudouridine at positions 38, 39 and 40 in the anticodon stem and loop of transfer RNAs. The protein is tRNA pseudouridine synthase A of Actinobacillus pleuropneumoniae serotype 7 (strain AP76).